The chain runs to 366 residues: MTPEHLPTEQYEAQLAEKVVRLQSMMAPFSDLVPEVFRSPVSHYRMRAEFRIWHDGDDLYHIIFDQQTKSRIRVDSFPAASELINQLMTAMIAGVRNNPVLRHKLFQIDYLTTLSNQAVVSLLYHKKLDDEWRQQAEALRDALRAQNLNVHLIGRATKTKIELDQDYIDERLPVAGKEMIYRQVENSFTQPNAAMNIQMLEWALDVTKGSKGDLLELYCGNGNFSLALARNFDRVLATEIAKPSVAAAQYNIAANHIDNVQIIRMAAEEFTQAMNGVREFNRLQGIDLKSYQCETIFVDPPRSGLDSETEKMVQAYPRILYISCNPETLCKNLETLSQTHKVERLALFDQFPYTHHMECGVLLTAK.

S-adenosyl-L-methionine contacts are provided by Gln-190, Tyr-218, Asn-223, Glu-239, and Asp-299. Cys-324 acts as the Nucleophile in catalysis. Glu-358 functions as the Proton acceptor in the catalytic mechanism.

Belongs to the class I-like SAM-binding methyltransferase superfamily. RNA M5U methyltransferase family. TrmA subfamily.

The enzyme catalyses uridine(54) in tRNA + S-adenosyl-L-methionine = 5-methyluridine(54) in tRNA + S-adenosyl-L-homocysteine + H(+). It catalyses the reaction uridine(341) in tmRNA + S-adenosyl-L-methionine = 5-methyluridine(341) in tmRNA + S-adenosyl-L-homocysteine + H(+). Dual-specificity methyltransferase that catalyzes the formation of 5-methyluridine at position 54 (m5U54) in all tRNAs, and that of position 341 (m5U341) in tmRNA (transfer-mRNA). This chain is tRNA/tmRNA (uracil-C(5))-methyltransferase, found in Escherichia coli O127:H6 (strain E2348/69 / EPEC).